We begin with the raw amino-acid sequence, 750 residues long: Photosystem I P700 chlorophyll a apoprotein A1 (750 aa).

Helical transmembrane passes span 70–93 (VFSAHFGQLAIIFIWLSGMYFHGA), 156–179 (LYSTAIGGLIFAALMLFAGWFHYH), 195–219 (LNHHLAGLLGLGSLAWAGHQVHVSL), 291–309 (TAHHHLAIAVVFLVAGHMY), 346–369 (WHAQLALNLAMLGSLTIIVAHHMY), 385–411 (LSLFTHHMWIGGFTIVGAAAHAAIFMV), 433–455 (AIISHLNWACIFLGFHSFGLYIH), and 531–549 (FLVHHIHAFTIHVTVLILL). [4Fe-4S] cluster contacts are provided by Cys-573 and Cys-582. A run of 2 helical transmembrane segments spans residues 589-610 (HVFLGLFWMYNAISVVIFHFSW) and 664-686 (LSAYGLLFLGAHFVWAFSLMFLF). His-675 contacts chlorophyll a'. Residues Met-683 and Tyr-691 each contribute to the chlorophyll a site. A phylloquinone-binding site is contributed by Trp-692. A helical transmembrane segment spans residues 724 to 744 (AVGVAHYLLGGIATTWAFFLA).

Belongs to the PsaA/PsaB family. The PsaA/B heterodimer binds the P700 chlorophyll special pair and subsequent electron acceptors. PSI consists of a core antenna complex that captures photons, and an electron transfer chain that converts photonic excitation into a charge separation. The eukaryotic PSI reaction center is composed of at least 11 subunits. It depends on P700 is a chlorophyll a/chlorophyll a' dimer, A0 is one or more chlorophyll a, A1 is one or both phylloquinones and FX is a shared 4Fe-4S iron-sulfur center. as a cofactor.

It is found in the plastid. It localises to the chloroplast thylakoid membrane. The catalysed reaction is reduced [plastocyanin] + hnu + oxidized [2Fe-2S]-[ferredoxin] = oxidized [plastocyanin] + reduced [2Fe-2S]-[ferredoxin]. In terms of biological role, psaA and PsaB bind P700, the primary electron donor of photosystem I (PSI), as well as the electron acceptors A0, A1 and FX. PSI is a plastocyanin-ferredoxin oxidoreductase, converting photonic excitation into a charge separation, which transfers an electron from the donor P700 chlorophyll pair to the spectroscopically characterized acceptors A0, A1, FX, FA and FB in turn. Oxidized P700 is reduced on the lumenal side of the thylakoid membrane by plastocyanin. The protein is Photosystem I P700 chlorophyll a apoprotein A1 of Anthoceros angustus (Hornwort).